We begin with the raw amino-acid sequence, 1943 residues long: Beta-L-arabinobiosidase (1943 aa).

The segment at residues 1-32 (MHHSTRKRWLASIGAVAAVATLATGGAVTAQA) is a signal peptide (tat-type signal). F5/8 type C domains are found at residues 892 to 1049 (TNVD…AYNT) and 1142 to 1302 (SKEI…AYAI). Positions 1061–1157 (TPQVDAYVSS…HGIPSDGTVN (97 aa)) constitute a PKD domain. FIVAR domains follow at residues 1678-1716 (ANGL…EQVA), 1746-1790 (DAAK…AAVQ), and 1823-1864 (QAKK…VDAA). The segment at 1875–1906 (TKVEQKPGSQQPGVTDTDKDDKDNKGDRVPPT) is disordered. Over residues 1890-1902 (DTDKDDKDNKGDR) the composition is skewed to basic and acidic residues. The helical transmembrane segment at 1908-1928 (AAVSVVAAAAVLLTAAGVTIL) threads the bilayer.

It belongs to the glycosyl hydrolase 121 family. Post-translationally, predicted to be exported by the Tat system. The position of the signal peptide cleavage has not been experimentally proven.

The protein resides in the membrane. The enzyme catalyses 4-O-(beta-L-arabinofuranosyl-(1-&gt;2)-beta-L-arabinofuranosyl-(1-&gt;2)-beta-L-arabinofuranosyl)-(2S,4S)-4-hydroxyproline + H2O = 4-O-(beta-L-arabinofuranosyl)-(2S,4S)-4-hydroxyproline + beta-L-arabinofuranosyl-(1-&gt;2)-beta-L-arabinofuranose. Beta-L-arabinobiosidase that removes L-arabinofuranose-beta-1,2-L-arabinofuranose disaccharide from various substrates such as carrot extensin and potato lectin. Also acts on L-arabinofuranose (Ara)-beta-1,2-Ara-beta-1,2-Ara-beta-Hyp (Ara(3)-Hyp) but not on Ara-beta-1,3-Ara-beta-1,2-Ara-beta-1,2-Ara-beta--Hyp (Ara(4)-Hyp) or Ara-beta-1,2-Ara-beta-Hyp (Ara(2)-Hyp), suggesting a specificity for unmodified Ara(3)-Hyp substrate. In the presence of 1-alkanols, shows transglycosylation activity, retaining the anomeric configuration of the arabinofuranose residue. The protein is Beta-L-arabinobiosidase (hypBA2) of Bifidobacterium longum subsp. longum (strain ATCC 15707 / DSM 20219 / JCM 1217 / NCTC 11818 / E194b).